We begin with the raw amino-acid sequence, 658 residues long: Phosphomethylpyrimidine synthase (658 aa).

Residues 1-22 (MNNSTDAVNPAKKPQTRREKRE) form a disordered region. Substrate-binding positions include Asn248, Met277, Tyr306, His342, 362–364 (SRG), 403–406 (DGLR), and Glu442. His446 contacts Zn(2+). A substrate-binding site is contributed by Tyr469. His510 contributes to the Zn(2+) binding site. [4Fe-4S] cluster is bound by residues Cys590, Cys593, and Cys598.

It belongs to the ThiC family. As to quaternary structure, homodimer. Requires [4Fe-4S] cluster as cofactor.

It carries out the reaction 5-amino-1-(5-phospho-beta-D-ribosyl)imidazole + S-adenosyl-L-methionine = 4-amino-2-methyl-5-(phosphooxymethyl)pyrimidine + CO + 5'-deoxyadenosine + formate + L-methionine + 3 H(+). It functions in the pathway cofactor biosynthesis; thiamine diphosphate biosynthesis. Its function is as follows. Catalyzes the synthesis of the hydroxymethylpyrimidine phosphate (HMP-P) moiety of thiamine from aminoimidazole ribotide (AIR) in a radical S-adenosyl-L-methionine (SAM)-dependent reaction. In Colwellia psychrerythraea (strain 34H / ATCC BAA-681) (Vibrio psychroerythus), this protein is Phosphomethylpyrimidine synthase.